The primary structure comprises 863 residues: Probable beta-glucosidase A (863 aa).

Positions 1-19 are cleaved as a signal peptide; it reads MKLGWLEAAALTAASVASA. N-linked (GlcNAc...) asparagine glycosylation is found at Asn65, Asn214, and Asn255. Residue Asp283 is part of the active site. N-linked (GlcNAc...) asparagine glycans are attached at residues Asn318, Asn325, Asn357, Asn493, Asn526, Asn545, Asn567, Asn664, and Asn715. A disordered region spans residues 720–754; sequence KESSGDPNYGWDDEDYIPEGAKDGSPQDVLPSGGG.

The protein belongs to the glycosyl hydrolase 3 family.

It is found in the secreted. The enzyme catalyses Hydrolysis of terminal, non-reducing beta-D-glucosyl residues with release of beta-D-glucose.. It functions in the pathway glycan metabolism; cellulose degradation. In terms of biological role, beta-glucosidases are one of a number of cellulolytic enzymes involved in the degradation of cellulosic biomass. Catalyzes the last step releasing glucose from the inhibitory cellobiose. This is Probable beta-glucosidase A (bglA) from Emericella nidulans (strain FGSC A4 / ATCC 38163 / CBS 112.46 / NRRL 194 / M139) (Aspergillus nidulans).